The sequence spans 618 residues: ADP,ATP carrier protein 2, chloroplastic (618 aa).

The transit peptide at 1 to 76 directs the protein to the chloroplast; it reads MEGLIQTRGI…KERSRGFICK (76 aa). Residue Ala-77 is modified to N-acetylalanine. The next 11 membrane-spanning stretches (helical) occupy residues 110–130, 148–168, 179–199, 237–257, 270–289, 312–332, 368–388, 401–421, 441–461, 464–484, and 542–562; these read LKKIVPLGLMFFCILFNYTIL, IIPFLKTWVNLPMAIGFMLLY, ALFYTVIVPFIVYFGAFGFVM, LFYVMAELWGSVVVSVLFWGF, FYPLFGLGANVALIFSGRTV, AMMSIVVGMGLAICFLYWWVN, LATLVVAYGISINLVEVTWKS, SAFMGDFSTCTGIATFTMMLL, VLLLTGVAFFSLILFGGPFAP, AKLGMTPLLAAVYVGALQNIF, and LANSTPYLGVILLGIVTAWLA. Positions 586 to 618 are disordered; it reads RASSVKIPVVSQEDAPSGETTSQLSEKSTPTGI. Positions 603 to 618 are enriched in polar residues; the sequence is GETTSQLSEKSTPTGI.

This sequence belongs to the ADP/ATP translocase tlc (TC 2.A.12.2) family.

The protein resides in the plastid. The protein localises to the chloroplast membrane. The chain is ADP,ATP carrier protein 2, chloroplastic (AATP2) from Arabidopsis thaliana (Mouse-ear cress).